The chain runs to 370 residues: Glutamine synthetase (370 aa).

An N-acetylalanine modification is found at Ala2. Residue Ser5 is modified to Phosphoserine. The region spanning 24–103 is the GS beta-grasp domain; the sequence is IIAEYVWIDG…VLAACYNNDG (80 aa). In terms of domain architecture, GS catalytic spans 110–370; that stretch reads HRHEAAKLFA…MTKEFERESS (261 aa). Residues Lys283, Lys324, and Lys363 each participate in a glycyl lysine isopeptide (Lys-Gly) (interchain with G-Cter in ubiquitin) cross-link.

It belongs to the glutamine synthetase family. As to quaternary structure, homooctamer.

It localises to the cytoplasm. It carries out the reaction L-glutamate + NH4(+) + ATP = L-glutamine + ADP + phosphate + H(+). This Saccharomyces cerevisiae (strain ATCC 204508 / S288c) (Baker's yeast) protein is Glutamine synthetase (GLN1).